Reading from the N-terminus, the 549-residue chain is Glucose-6-phosphate isomerase (549 aa).

An N6-acetyllysine mark is found at Lys-80, Lys-228, and Lys-234. Glu-355 acts as the Proton donor in catalysis. Catalysis depends on residues His-386 and Lys-514.

It belongs to the GPI family.

The protein resides in the cytoplasm. The enzyme catalyses alpha-D-glucose 6-phosphate = beta-D-fructose 6-phosphate. It participates in carbohydrate biosynthesis; gluconeogenesis. The protein operates within carbohydrate degradation; glycolysis; D-glyceraldehyde 3-phosphate and glycerone phosphate from D-glucose: step 2/4. In terms of biological role, catalyzes the reversible isomerization of glucose-6-phosphate to fructose-6-phosphate. The polypeptide is Glucose-6-phosphate isomerase (Shigella flexneri).